Consider the following 364-residue polypeptide: MTTPLIEIRQIYKSYGNTPILNNVSLNVNHGEFLTLLGPSGCGKTTLLRLISGFEQPTQGEIFINGQCVNQLPPQKRDVHTVFQSYALFPHLSVFENVAFALRCKKTPNQEIRKRVFDALKLVQLESLAERNVKQLSGGQQQRVAIARAIINRPQVLLLDEPLSSLDYRLRKAMQSELKQLQKTLNMTFIFVTHDQEEALSMSDRIVVFNHGHIEQIGTPKAVYETPANLHVAMFIGEANIFDIQVHTVKDQDIITNIEGIQLSCKNTGNYQVNDRLHLIVRPEDIRVWSLSEVEKTEGMLPGRIVDIIYKGSTVDLKVELSSGKIINASEFFDEDDDKLEYTLHETVWVQWLPGWEVLLPYEG.

The 231-residue stretch at 6–236 folds into the ABC transporter domain; that stretch reads IEIRQIYKSY…PANLHVAMFI (231 aa). Residue 38-45 participates in ATP binding; sequence GPSGCGKT.

This sequence belongs to the ABC transporter superfamily. Spermidine/putrescine importer (TC 3.A.1.11.1) family. As to quaternary structure, the complex is composed of two ATP-binding proteins (PotA), two transmembrane proteins (PotB and PotC) and a solute-binding protein (PotD).

The protein localises to the cell inner membrane. The enzyme catalyses ATP + H2O + polyamine-[polyamine-binding protein]Side 1 = ADP + phosphate + polyamineSide 2 + [polyamine-binding protein]Side 1.. Its function is as follows. Part of the ABC transporter complex PotABCD involved in spermidine/putrescine import. Responsible for energy coupling to the transport system. The protein is Spermidine/putrescine import ATP-binding protein PotA of Legionella pneumophila subsp. pneumophila (strain Philadelphia 1 / ATCC 33152 / DSM 7513).